Reading from the N-terminus, the 470-residue chain is Retinoic acid receptor RXR-gamma (470 aa).

Positions 1–145 are modulating; that stretch reads MHLATETAPS…NSPGALTKHI (145 aa). 2 NR C4-type zinc fingers span residues 146–166 and 182–206; these read CAIC…CEGC and CRDS…YQKC. Residues 146-211 constitute a DNA-binding region (nuclear receptor); it reads CAICGDRSSG…RYQKCLAMGM (66 aa). Residues 212–235 are hinge; the sequence is KREAVQEERQRSREKSDTEAESTS. Over residues 217 to 229 the composition is skewed to basic and acidic residues; it reads QEERQRSREKSDT. Positions 217 to 242 are disordered; sequence QEERQRSREKSDTEAESTSSTSEEMP. Positions 238–466 constitute an NR LBD domain; the sequence is SEEMPVERIL…TFLMEMLETP (229 aa).

Belongs to the nuclear hormone receptor family. NR2 subfamily. Homodimer. Heterodimer; with a rar molecule. Binds DNA preferentially as a rar/rxr heterodimer.

It is found in the nucleus. In terms of biological role, receptor for retinoic acid. Retinoic acid receptors bind as heterodimers to their target response elements in response to their ligands, all-trans or 9-cis retinoic acid, and regulate gene expression in various biological processes. The rar/rxr heterodimers bind to the retinoic acid response elements (RARE) composed of tandem 5'-AGGTCA-3' sites known as DR1-DR5. The high affinity ligand for rxrs is 9-cis retinoic acid. The polypeptide is Retinoic acid receptor RXR-gamma (rxrg) (Xenopus laevis (African clawed frog)).